A 1169-amino-acid chain; its full sequence is Transcription-repair-coupling factor (1169 aa).

Positions aspartate 634 to isoleucine 795 constitute a Helicase ATP-binding domain. An ATP-binding site is contributed by glycine 647–threonine 654. The DEEQ box motif lies at aspartate 748 to glutamine 751. The region spanning valine 809–asparagine 970 is the Helicase C-terminal domain.

In the N-terminal section; belongs to the UvrB family. The protein in the C-terminal section; belongs to the helicase family. RecG subfamily.

The protein localises to the cytoplasm. In terms of biological role, couples transcription and DNA repair by recognizing RNA polymerase (RNAP) stalled at DNA lesions. Mediates ATP-dependent release of RNAP and its truncated transcript from the DNA, and recruitment of nucleotide excision repair machinery to the damaged site. The sequence is that of Transcription-repair-coupling factor from Staphylococcus epidermidis (strain ATCC 35984 / DSM 28319 / BCRC 17069 / CCUG 31568 / BM 3577 / RP62A).